The following is a 296-amino-acid chain: NAD kinase (296 aa).

Asp73 functions as the Proton acceptor in the catalytic mechanism. Residues 73–74 (DG), Lys78, 151–152 (NE), Arg178, Asp180, and 191–196 (TAHAMS) contribute to the NAD(+) site.

It belongs to the NAD kinase family. It depends on a divalent metal cation as a cofactor.

Its subcellular location is the cytoplasm. The enzyme catalyses NAD(+) + ATP = ADP + NADP(+) + H(+). Functionally, involved in the regulation of the intracellular balance of NAD and NADP, and is a key enzyme in the biosynthesis of NADP. Catalyzes specifically the phosphorylation on 2'-hydroxyl of the adenosine moiety of NAD to yield NADP. The polypeptide is NAD kinase (Francisella tularensis subsp. novicida (strain U112)).